A 260-amino-acid polypeptide reads, in one-letter code: Thrombin-like enzyme 1 (260 aa).

The first 18 residues, 1 to 18 (MVLITVLANLLILQLSYA), serve as a signal peptide directing secretion. Positions 19–24 (QKSSEL) are excised as a propeptide. In terms of domain architecture, Peptidase S1 spans 25-251 (VIGGDECNIN…HLDWIQSIIA (227 aa)). Intrachain disulfides connect Cys-31–Cys-165, Cys-52–Cys-68, Cys-102–Cys-258, Cys-144–Cys-212, Cys-176–Cys-191, and Cys-202–Cys-227. His-67 functions as the Charge relay system in the catalytic mechanism. A glycan (N-linked (GlcNAc...) asparagine) is linked at Asn-105. Asp-112 acts as the Charge relay system in catalysis. N-linked (GlcNAc...) asparagine glycans are attached at residues Asn-156 and Asn-172. Ser-206 functions as the Charge relay system in the catalytic mechanism. The N-linked (GlcNAc...) asparagine glycan is linked to Asn-253.

The protein belongs to the peptidase S1 family. Snake venom subfamily. In terms of assembly, monomer. As to expression, expressed by the venom gland.

It is found in the secreted. In terms of biological role, thrombin-like snake venom serine protease. The chain is Thrombin-like enzyme 1 from Trimeresurus albolabris (White-lipped pit viper).